The chain runs to 221 residues: Superoxide dismutase [Mn] 1, mitochondrial (221 aa).

The transit peptide at 1–24 (MLQNTVRCVSKLVQPITGVAAVRS) directs the protein to the mitochondrion. Residues histidine 50, histidine 98, aspartate 182, and histidine 186 each coordinate Mn(2+).

The protein belongs to the iron/manganese superoxide dismutase family. In terms of assembly, homotetramer. Requires Mn(2+) as cofactor.

Its subcellular location is the mitochondrion matrix. The enzyme catalyses 2 superoxide + 2 H(+) = H2O2 + O2. Functionally, destroys superoxide anion radicals which are normally produced within the cells and which are toxic to biological systems. This chain is Superoxide dismutase [Mn] 1, mitochondrial (sod-2), found in Caenorhabditis elegans.